The sequence spans 1444 residues: Protein shortage in chiasmata 1 ortholog (1444 aa).

The span at 1106–1117 (SITKSPQISSPQ) shows a compositional bias: low complexity. The interval 1106–1129 (SITKSPQISSPQENRNQISTLSSQ) is disordered.

Belongs to the XPF family. Highly divergent. In terms of assembly, interacts with TEX11. Interacts with SPO16.

It localises to the chromosome. ATPase required during meiosis for the formation of crossover recombination intermediates. Binds DNA: preferentially binds to single-stranded DNA and DNA branched structures. Does not show nuclease activity in vitro, but shows ATPase activity, which is stimulated by the presence of single-stranded DNA. Plays a key role in homologous recombination and crossing-over in meiotic prophase I in male and female germ cells. Required for proper synaptonemal complex assembly and homologous chromosome pairing. Requiref for recruitment TEX11 and MSH4 to recombination intermediates. This chain is Protein shortage in chiasmata 1 ortholog, found in Homo sapiens (Human).